We begin with the raw amino-acid sequence, 272 residues long: Glutamate racemase (272 aa).

Substrate contacts are provided by residues 16–17 and 48–49; these read DS and YG. The active-site Proton donor/acceptor is Cys79. Substrate is bound at residue 80 to 81; it reads NT. The Proton donor/acceptor role is filled by Cys191. Residue 192–193 participates in substrate binding; sequence TH.

It belongs to the aspartate/glutamate racemases family.

The catalysed reaction is L-glutamate = D-glutamate. It participates in cell wall biogenesis; peptidoglycan biosynthesis. Provides the (R)-glutamate required for cell wall biosynthesis. The polypeptide is Glutamate racemase (Chlorobaculum tepidum (strain ATCC 49652 / DSM 12025 / NBRC 103806 / TLS) (Chlorobium tepidum)).